A 175-amino-acid polypeptide reads, in one-letter code: Protein OPG036 (175 aa).

It belongs to the poxviridae OPG036 family.

It localises to the host nucleus. Functionally, plays a role in the inhibition of host innate immune response. Within the host nucleus, inhibits activation of interferon-beta promoter by inhibiting IRF3 activation. This Homo sapiens (Human) protein is Protein OPG036 (OPG036).